Here is a 221-residue protein sequence, read N- to C-terminus: Deoxyribose-phosphate aldolase (221 aa).

The active-site Proton donor/acceptor is Asp91. The Schiff-base intermediate with acetaldehyde role is filled by Lys153. Catalysis depends on Lys182, which acts as the Proton donor/acceptor.

The protein belongs to the DeoC/FbaB aldolase family. DeoC type 1 subfamily.

It is found in the cytoplasm. The catalysed reaction is 2-deoxy-D-ribose 5-phosphate = D-glyceraldehyde 3-phosphate + acetaldehyde. It functions in the pathway carbohydrate degradation; 2-deoxy-D-ribose 1-phosphate degradation; D-glyceraldehyde 3-phosphate and acetaldehyde from 2-deoxy-alpha-D-ribose 1-phosphate: step 2/2. Catalyzes a reversible aldol reaction between acetaldehyde and D-glyceraldehyde 3-phosphate to generate 2-deoxy-D-ribose 5-phosphate. The chain is Deoxyribose-phosphate aldolase from Clostridium botulinum (strain Alaska E43 / Type E3).